Reading from the N-terminus, the 840-residue chain is OTU domain-containing protein 7B (840 aa).

The tract at residues 49–88 (AGNLSPPFSGGSTCPKTPEKGGSDREPTRPSRPILQRQDD) is disordered. The span at 65-77 (TPEKGGSDREPTR) shows a compositional bias: basic and acidic residues. The residue at position 100 (serine 100) is a Phosphoserine. The interval 152-401 (ERDLIEQSML…AVDPGKGWEW (250 aa)) is TRAF-binding. A catalytic region spans residues 167-440 (AGRLNWWVSM…VKWIPLSSDS (274 aa)). In terms of domain architecture, OTU spans 183 to 365 (LLPLATTGDG…QAHFSALVSM (183 aa)). The tract at residues 187-193 (ATTGDGN) is regulatory loop. Residue aspartate 191 is part of the active site. The active-site Nucleophile is cysteine 194. Histidine 358 acts as the Proton acceptor in catalysis. The span at 440 to 452 (SQAPLAQPESPTA) shows a compositional bias: polar residues. Disordered regions lie at residues 440–592 (SQAP…YSQE) and 653–710 (IMNG…VHCQ). Basic and acidic residues-rich tracts occupy residues 456-471 (DEPR…DKES) and 488-500 (SKRD…KRAD). A phosphoserine mark is found at serine 464, serine 467, and serine 471. Positions 483–498 (RRKEKSKRDREKDKKR) match the Nuclear localization signal motif. Gly residues predominate over residues 531 to 541 (KPGGLGSGSGI). Residue threonine 730 is modified to Phosphothreonine. The A20-type zinc finger occupies 793–828 (PPTQTKCKQPNCSFYGHPETNNLCSCCYREELRRRE). Zn(2+) is bound by residues cysteine 799, cysteine 804, cysteine 816, and cysteine 819.

Belongs to the peptidase C64 family. In terms of assembly, interacts with TRAF6. Interacts with PARK7, leading to inhibit deubiquitinase activity. Interacts with EGFR, ITCH and NEDD4. Interacts with TRAF3. Interacts with ZAP70 in activated T cells, but not in resting T cells. Phosphorylated by EGFR.

Its subcellular location is the cytoplasm. The protein localises to the nucleus. The catalysed reaction is Thiol-dependent hydrolysis of ester, thioester, amide, peptide and isopeptide bonds formed by the C-terminal Gly of ubiquitin (a 76-residue protein attached to proteins as an intracellular targeting signal).. Its activity is regulated as follows. Deubiquitinase activity is inhibited following interaction with PARK7. In terms of biological role, negative regulator of the non-canonical NF-kappa-B pathway that acts by mediating deubiquitination of TRAF3, an inhibitor of the NF-kappa-B pathway, thereby acting as a negative regulator of B-cell responses. In response to non-canonical NF-kappa-B stimuli, deubiquitinates 'Lys-48'-linked polyubiquitin chains of TRAF3, preventing TRAF3 proteolysis and over-activation of non-canonical NF-kappa-B. Negatively regulates mucosal immunity against infections. Deubiquitinates ZAP70, and thereby regulates T cell receptor (TCR) signaling that leads to the activation of NF-kappa-B. Plays a role in T cell homeostasis and is required for normal T cell responses, including production of IFNG and IL2. Mediates deubiquitination of EGFR. Has deubiquitinating activity toward 'Lys-11', 'Lys-48' and 'Lys-63'-linked polyubiquitin chains. Has a much higher catalytic rate with 'Lys-11'-linked polyubiquitin chains (in vitro); however the physiological significance of these data are unsure. Hydrolyzes both linear and branched forms of polyubiquitin. Acts as a regulator of mTORC1 and mTORC2 assembly by mediating 'Lys-63'-linked deubiquitination of MLST8, thereby promoting assembly of the mTORC2 complex, while inibiting formation of the mTORC1 complex. The sequence is that of OTU domain-containing protein 7B (Otud7b) from Mus musculus (Mouse).